Reading from the N-terminus, the 373-residue chain is C-C chemokine receptor type 2 (373 aa).

Topologically, residues Met1–Pro60 are extracellular. A helical membrane pass occupies residues Leu61 to Ile81. The Cytoplasmic portion of the chain corresponds to Ser82–Asp91. The chain crosses the membrane as a helical span at residues Ile92 to Ala112. The Extracellular portion of the chain corresponds to His113–Leu128. Cys126 and Cys203 are oxidised to a cystine. Residues Phe129 to Ile149 traverse the membrane as a helical segment. The Cytoplasmic portion of the chain corresponds to Asp150–Gly170. Tyr152 is subject to Phosphotyrosine; by JAK2. The helical transmembrane segment at Val171–Phe191 threads the bilayer. Over Thr192–Asn220 the chain is Extracellular. A helical membrane pass occupies residues Ile221–Thr241. Over Leu242 to Arg256 the chain is Cytoplasmic. The chain crosses the membrane as a helical span at residues Leu257 to Phe277. At Leu278–Gln301 the chain is on the extracellular side. The chain crosses the membrane as a helical span at residues Val302–Gly322. Residues Glu323 to Leu373 are Cytoplasmic-facing.

This sequence belongs to the G-protein coupled receptor 1 family. Interacts with ARRB1. Interacts (via extracellular N-terminal region) with beta-defensin DEFB106A/DEFB106B; this interaction may preferentially require specific tyrosine sulfation on CCR2. Interacts with NUP85; the interaction is required for CCR2 clusters formation on the cell membrane and CCR2 signaling. Post-translationally, N-glycosylated. Sulfation increases the affinity for both monomeric and dimeric CCL2 with stronger binding to the monomeric form. Binding of sulfated CCR2 to CCL2 promotes conversion of CCL2 from dimer to monomer. As to expression, expressed in lung, spleen, kidney, thymus and macrophages.

It is found in the cell membrane. In terms of biological role, key functional receptor for CCL2 but can also bind CCL7 and CCL12. Its binding with CCL2 on monocytes and macrophages mediates chemotaxis and migration induction through the activation of the PI3K cascade, the small G protein Rac and lamellipodium protrusion. Also acts as a receptor for the beta-defensin DEFB106A/DEFB106B. Regulates the expression of T-cell inflammatory cytokines and T-cell differentiation, promoting the differentiation of T-cells into T-helper 17 cells (Th17) during inflammation. Facilitates the export of mature thymocytes by enhancing directional movement of thymocytes to sphingosine-1-phosphate stimulation and up-regulation of S1P1R expression; signals through the JAK-STAT pathway to regulate FOXO1 activity leading to an increased expression of S1P1R. Plays an important role in mediating peripheral nerve injury-induced neuropathic pain. Increases NMDA-mediated synaptic transmission in both dopamine D1 and D2 receptor-containing neurons, which may be caused by MAPK/ERK-dependent phosphorylation of GRIN2B/NMDAR2B. Mediates the recruitment of macrophages and monocytes to the injury site following brain injury. This Rattus norvegicus (Rat) protein is C-C chemokine receptor type 2 (Ccr2).